The following is a 467-amino-acid chain: Sialic acid-binding Ig-like lectin 12 (467 aa).

Positions 1–18 are cleaved as a signal peptide; it reads MLLLLLLLLLWGIKGVEG. The Extracellular portion of the chain corresponds to 19–353; that stretch reads QNPQEVFTLN…ATLSEMMMGT (335 aa). The Ig-like V-type domain occupies 21–141; sequence PQEVFTLNVE…TKYNYMWDKM (121 aa). Cystine bridges form between C40-C176, C45-C108, and C170-C219. N46 carries N-linked (GlcNAc...) asparagine glycosylation. R126 serves as a coordination point for N-acetylneuraminate. Ig-like C2-type domains lie at 152 to 239 and 242 to 339; these read PQIL…LNVS and PKNL…LSLS. Residues N167, N197, N216, N227, N237, N244, N262, N287, and N294 are each glycosylated (N-linked (GlcNAc...) asparagine). Residues C278 and C323 are joined by a disulfide bond. A helical membrane pass occupies residues 354 to 374; sequence FVGSGVTALLFLSVCILLLAV. Residues 375–467 are Cytoplasmic-facing; it reads RSYRRKPARP…IKFPQRTAWP (93 aa). The short motif at 430–435 is the ITIM motif element; sequence IHYATL. A phosphotyrosine mark is found at Y432 and Y455. The SLAM-like motif motif lies at 453 to 458; that stretch reads TEYSEI.

This sequence belongs to the immunoglobulin superfamily. SIGLEC (sialic acid binding Ig-like lectin) family. Homodimer; disulfide-linked. Interacts with PTPN6/SHP-1 and PTPN11/SHP-2 upon phosphorylation. Phosphorylation of Tyr-432 is required for binding to PTPN6 and PTPN11. Phosphorylation of Tyr-455 is involved in binding to PTPN6. Tyr-432 needs to be phosphorylated prior to Tyr-455. Expressed by monocytic/myeloid lineage cells. Found at higher levels in spleen, liver and heart. Found at lower levels in kidney and lung.

The protein localises to the membrane. Its function is as follows. Putative adhesion molecule that mediates sialic-acid dependent binding to cells. The sialic acid recognition site may be masked by cis interactions with sialic acids on the same cell surface. In the immune response, may act as an inhibitory receptor upon ligand induced tyrosine phosphorylation by recruiting cytoplasmic phosphatase(s) via their SH2 domain(s) that block signal transduction through dephosphorylation of signaling molecules. This is Sialic acid-binding Ig-like lectin 12 (Siglec12) from Mus musculus (Mouse).